The sequence spans 182 residues: Large ribosomal subunit protein uL16 (182 aa).

It belongs to the universal ribosomal protein uL16 family. Part of the 50S ribosomal subunit.

This Thermococcus kodakarensis (strain ATCC BAA-918 / JCM 12380 / KOD1) (Pyrococcus kodakaraensis (strain KOD1)) protein is Large ribosomal subunit protein uL16.